Reading from the N-terminus, the 168-residue chain is Ubiquitin-fold modifier-conjugating enzyme 1 (168 aa).

Residue C119 is the Glycyl thioester intermediate of the active site.

It belongs to the ubiquitin-conjugating enzyme family. UFC1 subfamily.

Its function is as follows. E2-like enzyme which forms an intermediate with UFM1 via a thioester linkage. The chain is Ubiquitin-fold modifier-conjugating enzyme 1 from Drosophila grimshawi (Hawaiian fruit fly).